We begin with the raw amino-acid sequence, 301 residues long: Transcriptional activator FeaR (301 aa).

Positions 199 to 299 constitute an HTH araC/xylS-type domain; the sequence is QKVVTLIDDN…GMTPGEYRRK (101 aa). DNA-binding regions (H-T-H motif) lie at residues 217-238 and 266-289; these read EWIAGETGMSVRSLYRMFADKG and LAGIGFHWGFSDQSHFSTVFKQRF.

In terms of biological role, positive regulator of tynA/maoA and feaB/padA, the genes for 2-phenylethylamine catabolism. This chain is Transcriptional activator FeaR (feaR), found in Escherichia coli (strain K12).